The primary structure comprises 86 residues: Toxin Tpa6 (86 aa).

Residues 1-20 form the signal peptide; it reads MSIFPIALALLLIGLEEGEA. Positions 22–85 constitute an LCN-type CS-alpha/beta domain; that stretch reads RDGYPLSKNN…WGDPGTKPCM (64 aa). Intrachain disulfides connect Cys-33-Cys-84, Cys-37-Cys-58, Cys-43-Cys-64, and Cys-47-Cys-66.

It belongs to the long (4 C-C) scorpion toxin superfamily. Sodium channel inhibitor family. Beta subfamily. Expressed by the venom gland.

The protein localises to the secreted. Functionally, beta toxins bind voltage-independently at site-4 of sodium channels (Nav) and shift the voltage of activation toward more negative potentials thereby affecting sodium channel activation and promoting spontaneous and repetitive firing. The sequence is that of Toxin Tpa6 from Tityus pachyurus (Colombian scorpion).